The primary structure comprises 394 residues: WAT1-related protein At2g40900 (394 aa).

10 helical membrane-spanning segments follow: residues 13 to 33 (FAMV…KTVL), 40 to 60 (YVLV…FALL), 67 to 87 (SKMT…GPVI), 102 to 122 (TFSS…ATLF), 142 to 162 (LVTV…INFF), 180 to 200 (AAVF…LQAA), 209 to 229 (LSMS…LAFV), 245 to 265 (LLAS…VQGL), 273 to 293 (VFVT…SFFV), and 298 to 318 (IYLG…AVLW). EamA domains are found at residues 22-147 (YAGM…TVVG) and 189-317 (LSWA…YAVL).

The protein belongs to the drug/metabolite transporter (DMT) superfamily. Plant drug/metabolite exporter (P-DME) (TC 2.A.7.4) family.

Its subcellular location is the membrane. The chain is WAT1-related protein At2g40900 from Arabidopsis thaliana (Mouse-ear cress).